A 364-amino-acid polypeptide reads, in one-letter code: Aminomethyltransferase (364 aa).

The protein belongs to the GcvT family. The glycine cleavage system is composed of four proteins: P, T, L and H.

The catalysed reaction is N(6)-[(R)-S(8)-aminomethyldihydrolipoyl]-L-lysyl-[protein] + (6S)-5,6,7,8-tetrahydrofolate = N(6)-[(R)-dihydrolipoyl]-L-lysyl-[protein] + (6R)-5,10-methylene-5,6,7,8-tetrahydrofolate + NH4(+). Its function is as follows. The glycine cleavage system catalyzes the degradation of glycine. The polypeptide is Aminomethyltransferase (Shigella flexneri).